The chain runs to 378 residues: Secreted LysM effector ldpA (378 aa).

A signal peptide spans 1–19 (MMKSIRFLASALALCLVDA). The span at 118–131 (WTPPTTTTRSTSSS) shows a compositional bias: low complexity. The tract at residues 118-139 (WTPPTTTTRSTSSSAGNGVTTP) is disordered. A LysM 1 domain is found at 152 to 198 (RFYLVVSGDSCYDIAAAQGISLDNFYTWNPAVGSSCGGLWPDYYVCV). Residues 208 to 230 (TTTTTTTPTTTSTTTTTAGNGVT) are disordered. 2 LysM domains span residues 245-291 (KFYQ…YVCV) and 330-376 (KFYL…YVCV).

Belongs to the secreted LysM effector family.

The protein localises to the secreted. It localises to the cell wall. Its subcellular location is the extracellular space. The protein resides in the extracellular matrix. Its function is as follows. Cell wall chitin of A.fumigatus recruits lung eosinophils during infection and ldpA might have a role in sequestration of chitin and act as triggers of host immunity to dampen host defense. The polypeptide is Secreted LysM effector ldpA (Aspergillus fumigatus (strain ATCC MYA-4609 / CBS 101355 / FGSC A1100 / Af293) (Neosartorya fumigata)).